Here is a 61-residue protein sequence, read N- to C-terminus: Small ribosomal subunit protein uS14 (61 aa).

Positions 24, 27, 40, and 43 each coordinate Zn(2+).

Belongs to the universal ribosomal protein uS14 family. Zinc-binding uS14 subfamily. In terms of assembly, part of the 30S ribosomal subunit. Contacts proteins S3 and S10. Zn(2+) serves as cofactor.

Its function is as follows. Binds 16S rRNA, required for the assembly of 30S particles and may also be responsible for determining the conformation of the 16S rRNA at the A site. The chain is Small ribosomal subunit protein uS14 from Anaeromyxobacter sp. (strain Fw109-5).